The following is a 169-amino-acid chain: DNA damage-inducible transcript 3 protein (169 aa).

The tract at residues 10–18 is interaction with TRIB3; it reads FGTLSSWEL. Residues 10 to 26 form an N-terminal region; the sequence is FGTLSSWELEAWYEDLQ. A phosphoserine; by CK2 mark is found at S14, S15, S30, and S31. The interval 32-139 is disordered; sequence DENGGTYVSP…KVAQLAEENE (108 aa). The segment covering 74 to 89 has biased composition (low complexity); it reads TSTSQSPHSPDSSQSS. 2 positions are modified to phosphoserine; by MAPK14: S79 and S82. The bZIP domain maps to 99 to 162; the sequence is QGRTRKRKQS…EATRRALIDR (64 aa). Residues 101–130 form a basic motif region; that stretch reads RTRKRKQSGHSPARAGKQRMKEKEQENERK. The segment covering 119 to 139 has biased composition (basic and acidic residues); the sequence is RMKEKEQENERKVAQLAEENE. Residues 134–148 form a leucine-zipper region; that stretch reads LAEENERLKQEIERL.

It belongs to the bZIP family. In terms of assembly, heterodimer. Interacts with TCF7L2/TCF4, EP300/P300, HDAC1, HDAC5 and HDAC6. Interacts with TRIB3 which blocks its association with EP300/P300. Interacts with FOXO3, CEBPB and ATF4. As to quaternary structure, interacts with isoform AltDDIT3 of DDIT3. Ubiquitinated, leading to its degradation by the proteasome. In terms of processing, phosphorylation at serine residues by MAPK14 enhances its transcriptional activation activity while phosphorylation at serine residues by CK2 inhibits its transcriptional activation activity.

Its subcellular location is the cytoplasm. The protein localises to the nucleus. In terms of biological role, multifunctional transcription factor in endoplasmic reticulum (ER) stress response. Plays an essential role in the response to a wide variety of cell stresses and induces cell cycle arrest and apoptosis in response to ER stress. Plays a dual role both as an inhibitor of CCAAT/enhancer-binding protein (C/EBP) function and as an activator of other genes. Acts as a dominant-negative regulator of C/EBP-induced transcription: dimerizes with members of the C/EBP family, impairs their association with C/EBP binding sites in the promoter regions, and inhibits the expression of C/EBP regulated genes. Positively regulates the transcription of TRIB3, IL6, IL8, IL23, TNFRSF10B/DR5, PPP1R15A/GADD34, BBC3/PUMA, BCL2L11/BIM and ERO1L. Negatively regulates; expression of BCL2 and MYOD1, ATF4-dependent transcriptional activation of asparagine synthetase (ASNS), CEBPA-dependent transcriptional activation of hepcidin (HAMP) and CEBPB-mediated expression of peroxisome proliferator-activated receptor gamma (PPARG). Together with ATF4, mediates ER-mediated cell death by promoting expression of genes involved in cellular amino acid metabolic processes, mRNA translation and the unfolded protein response (UPR) in response to ER stress. Inhibits the canonical Wnt signaling pathway by binding to TCF7L2/TCF4, impairing its DNA-binding properties and repressing its transcriptional activity. Plays a regulatory role in the inflammatory response through the induction of caspase-11 (CASP4/CASP11) which induces the activation of caspase-1 (CASP1) and both these caspases increase the activation of pro-IL1B to mature IL1B which is involved in the inflammatory response. Acts as a major regulator of postnatal neovascularization through regulation of endothelial nitric oxide synthase (NOS3)-related signaling. The polypeptide is DNA damage-inducible transcript 3 protein (DDIT3) (Homo sapiens (Human)).